Reading from the N-terminus, the 166-residue chain is Bud site selection protein 20 (166 aa).

The Nuclear localization signal motif lies at 7–16; sequence KRYKTKRRTR. The nuclear export signal-like (NES-like) stretch occupies residues 17-31; the sequence is DLDLIYNDLSTKESV. The C2H2-type zinc-finger motif lies at 49-73; it reads HYCIHCAKYMETAIALKTHLKGKVH.

This sequence belongs to the ZNF593/BUD20 C2H2-type zinc-finger protein family. Associates with pre-60S ribosomal particles; released from the pre-60S particle very early in the cytoplasm.

Its subcellular location is the nucleus. It localises to the cytoplasm. Functionally, involved in pre-60S ribosomal particles maturation by promoting the nuclear export of the 60S ribosome. Involved in positioning the proximal bud pole signal. The protein is Bud site selection protein 20 of Saccharomyces cerevisiae (strain ATCC 204508 / S288c) (Baker's yeast).